The chain runs to 455 residues: MYKHPWLPNLDLIDEMLKEIGVNSLDELFNDIPAEIKINRLLNVAKGKPLSEYEIEKEINEKVKKNVELQAPPFIGAGICPHYIPNVVKFIIGRSEFYTSYTPYQPEISQGLLQALFEYQSLMAELLDMDVVNASMYDWGSALAEAVLMANRINGKKTVLVPENANPFHKEVVRTWIGGKGIKIEEVKYDKNSGELDLEDLEKKSNIDDISAIYIQQPNFFGIFESNIEHVIDVAKHKRALSIVGVNPLSLGLIKPPGSYEADIVVGDGQELGLPLNFGGPLMGVFAVRWDMSLVRQMPGRIVGITKDTNGKMGFTLILQTREQFIKREKATSNITTNEALLAIANAVYLSLLGKEGMRELTEEIYFRSHYAAKKLTEIDNVSMPFRSDFFEEFAIRFPIEYDKISNKLKERKLQGGLKLSDYTSLFCVTEVHDKKSIDLLVSTIQEMINGVETS.

It belongs to the GcvP family. N-terminal subunit subfamily. As to quaternary structure, the glycine cleavage system is composed of four proteins: P, T, L and H. In this organism, the P 'protein' is a heterodimer of two subunits.

The enzyme catalyses N(6)-[(R)-lipoyl]-L-lysyl-[glycine-cleavage complex H protein] + glycine + H(+) = N(6)-[(R)-S(8)-aminomethyldihydrolipoyl]-L-lysyl-[glycine-cleavage complex H protein] + CO2. Functionally, the glycine cleavage system catalyzes the degradation of glycine. The P protein binds the alpha-amino group of glycine through its pyridoxal phosphate cofactor; CO(2) is released and the remaining methylamine moiety is then transferred to the lipoamide cofactor of the H protein. In Saccharolobus islandicus (strain Y.G.57.14 / Yellowstone #1) (Sulfolobus islandicus), this protein is Probable glycine dehydrogenase (decarboxylating) subunit 1.